A 154-amino-acid chain; its full sequence is MGLSDGEWQLVLNVWGKVEADVGGHGQEVLIRLFTGHPETLEKFDKFKHLKTADEMKASEDLKKHGTTVLTALGGILKKKGQHEAELKPLAQSHATKHKIPIKYLEFISDAIVHVLHSKHPAEFGADAQAAMKKALELFRNDIAAKYKELGFQG.

Residues 2-148 (GLSDGEWQLV…FRNDIAAKYK (147 aa)) form the Globin domain. Phosphoserine is present on Ser4. His65 contributes to the nitrite binding site. O2 is bound at residue His65. Residue Thr68 is modified to Phosphothreonine. Position 94 (His94) interacts with heme b.

Belongs to the globin family. As to quaternary structure, monomeric.

The protein resides in the cytoplasm. Its subcellular location is the sarcoplasm. It carries out the reaction Fe(III)-heme b-[protein] + nitric oxide + H2O = Fe(II)-heme b-[protein] + nitrite + 2 H(+). The enzyme catalyses H2O2 + AH2 = A + 2 H2O. Monomeric heme protein which primary function is to store oxygen and facilitate its diffusion within muscle tissues. Reversibly binds oxygen through a pentacoordinated heme iron and enables its timely and efficient release as needed during periods of heightened demand. Depending on the oxidative conditions of tissues and cells, and in addition to its ability to bind oxygen, it also has a nitrite reductase activity whereby it regulates the production of bioactive nitric oxide. Under stress conditions, like hypoxia and anoxia, it also protects cells against reactive oxygen species thanks to its pseudoperoxidase activity. The chain is Myoglobin (MB) from Lepilemur mustelinus (Weasel sportive lemur).